The sequence spans 159 residues: Large ribosomal subunit protein uL15 (159 aa).

Residues 21-34 (LRPAPGAHKSKIRV) show a composition bias toward basic residues. Residues 21–55 (LRPAPGAHKSKIRVGRGEGSKGKTAGRGTKGSKAR) form a disordered region.

This sequence belongs to the universal ribosomal protein uL15 family. In terms of assembly, part of the 50S ribosomal subunit.

Its function is as follows. Binds to the 23S rRNA. In Frankia casuarinae (strain DSM 45818 / CECT 9043 / HFP020203 / CcI3), this protein is Large ribosomal subunit protein uL15.